A 623-amino-acid chain; its full sequence is Heterogeneous nuclear ribonucleoprotein Q (623 aa).

Position 2 is an N-acetylalanine (alanine 2). The residue at position 159 (serine 159) is a Phosphoserine. RRM domains are found at residues 162–241 (TEIF…ISVA), 243–325 (NRLF…WADP), and 338–408 (KVLF…FAKP). A Glycyl lysine isopeptide (Lys-Gly) (interchain with G-Cter in SUMO2) cross-link involves residue lysine 168. Lysine 221 is modified (N6-acetyllysine). The residue at position 363 (lysine 363) is an N6-acetyllysine. Tyrosine 373 is modified (phosphotyrosine). An interaction with APOBEC1 region spans residues 400-561 (NIEIVFAKPP…GARGGRGGNV (162 aa)). Arginine 444 carries the post-translational modification Asymmetric dimethylarginine; by PRMT1; alternate. An Omega-N-methylarginine; by PRMT1; alternate modification is found at arginine 444. 6 tandem repeats follow at residues 448–450 (RGG), 451–453 (RGG), 460–464 (YYGYE), 469–472 (YYGY), 478–480 (RGG), and 485–488 (YYGY). Residues 448 to 559 (RGGRGGYGYP…VRGARGGRGG (112 aa)) are 8 X 3 AA repeats of R-G-G. Residues 460–488 (YYGYEDYYDYYGYDYHNYRGGYEDPYYGY) are 3 X 4 AA repeats of Y-Y-G-Y. Arginine 496 carries the post-translational modification Omega-N-methylarginine; by PRMT1. Residues 497–623 (GRGGRGARGA…YQDTFGQQWK (127 aa)) form a disordered region. The stretch at 498–500 (RGG) is one 1-4 repeat. Over residues 504-522 (RGAAPSRGRGAAPPRGRAG) the composition is skewed to low complexity. Asymmetric dimethylarginine; by PRMT1 is present on arginine 510. Asymmetric dimethylarginine; by PRMT1; alternate is present on residues arginine 518, arginine 526, arginine 536, and arginine 539. Omega-N-methylarginine; by PRMT1; alternate occurs at positions 518, 526, 536, and 539. Positions 518-549 (RGRAGYSQRGGPGSARGVRGARGGAQQQRGRG) are interaction with SMN. The 1-5 repeat unit spans residues 526 to 528 (RGG). Tandem repeats lie at residues 539–541 (RGG), 554–556 (RGG), and 557–559 (RGG). The segment covering 550–562 (VRGARGGRGGNVG) has biased composition (gly residues). A Bipartite nuclear localization signal motif is present at residues 564–578 (KRKADGYNQPDSKRR). Positions 580-595 (TNNQNWGSQPIAQQPL) are enriched in polar residues. Phosphoserine is present on serine 587. Lysine 607 is covalently cross-linked (Glycyl lysine isopeptide (Lys-Gly) (interchain with G-Cter in SUMO2)). Over residues 611 to 623 (QEFYQDTFGQQWK) the composition is skewed to polar residues.

As to quaternary structure, isoform 1 is a component of the APOB mRNA editosome complex and interacts with APOBEC1 and A1CF (APOBEC1 complementation factor). Part of a complex associated with the FOS mCRD domain and consisting of PABPC1, PAIP1, CSDE1/UNR, HNRPD and SYNCRIP. Isoform 3 interacts with HNRPR. Interacts with POLR2A hyperphosphorylated C-terminal domain. Isoform 1, isoform 2 and isoform 3 interact with SMN. Isoform 3 interacts through its C-terminal domain with SYT7, SYT8 and SYT9. The non-phosphorylated and phosphorylated forms are colocalized with PAIP1 in polysomes. Interacts with HABP4. Identified in a histone pre-mRNA complex, at least composed of ERI1, LSM11, SLBP, SNRPB, SYNCRIP and YBX1. Identified in the spliceosome C complex. Component of the coding region determinant (CRD)-mediated complex, composed of DHX9, HNRNPU, IGF2BP1, SYNCRIP and YBX1. Identified in a mRNP complex, at least composed of DHX9, DDX3X, ELAVL1, HNRNPU, IGF2BP1, ILF3, PABPC1, PCBP2, PTBP2, STAU1, STAU2, SYNCRIP and YBX1. Identified in a mRNP granule complex, at least composed of ACTB, ACTN4, DHX9, ERG, HNRNPA1, HNRNPA2B1, HNRNPAB, HNRNPD, HNRNPL, HNRNPR, HNRNPU, HSPA1, HSPA8, IGF2BP1, ILF2, ILF3, NCBP1, NCL, PABPC1, PABPC4, PABPN1, RPLP0, RPS3, RPS3A, RPS4X, RPS8, RPS9, SYNCRIP, YBX1 and untranslated mRNAs. Interacts with GTPBP1. Component of the GAIT complex; in humans the complex assembly seems to be a two-step process in which EPRS1 first associates with SYNCRIP to form a pre-GAIT complex which is deficient in GAIT element binding. (Microbial infection) Interacts with minute virus of mice (MVM) NS1 protein. In terms of assembly, (Microbial infection) Interacts with herpes virus 8/HHV-8 protein vIRF-1; this interaction induces ubiquitination and degradation of SYNCRIP. In terms of processing, phosphorylated on tyrosine. The membrane-bound form found in microsomes is phosphorylated in vitro by insulin receptor tyrosine kinase (INSR). Phosphorylation is inhibited upon binding to RNA, whereas the cytoplasmic form is poorly phosphorylated. In terms of tissue distribution, ubiquitously expressed. Detected in heart, brain, pancreas, placenta, spleen, lung, liver, skeletal muscle, kidney, thymus, prostate, uterus, small intestine, colon, peripheral blood and testis.

The protein localises to the cytoplasm. It localises to the microsome. The protein resides in the endoplasmic reticulum. It is found in the nucleus. Its subcellular location is the nucleoplasm. Functionally, heterogenous nuclear ribonucleoprotein (hnRNP) implicated in mRNA processing mechanisms. Component of the CRD-mediated complex that promotes MYC mRNA stability. Isoform 1, isoform 2 and isoform 3 are associated in vitro with pre-mRNA, splicing intermediates and mature mRNA protein complexes. Isoform 1 binds to apoB mRNA AU-rich sequences. Isoform 1 is part of the APOB mRNA editosome complex and may modulate the postranscriptional C to U RNA-editing of the APOB mRNA through either by binding to A1CF (APOBEC1 complementation factor), to APOBEC1 or to RNA itself. May be involved in translationally coupled mRNA turnover. Implicated with other RNA-binding proteins in the cytoplasmic deadenylation/translational and decay interplay of the FOS mRNA mediated by the major coding-region determinant of instability (mCRD) domain. Interacts in vitro preferentially with poly(A) and poly(U) RNA sequences. Isoform 3 may be involved in cytoplasmic vesicle-based mRNA transport through interaction with synaptotagmins. Component of the GAIT (gamma interferon-activated inhibitor of translation) complex which mediates interferon-gamma-induced transcript-selective translation inhibition in inflammation processes. Upon interferon-gamma activation assembles into the GAIT complex which binds to stem loop-containing GAIT elements in the 3'-UTR of diverse inflammatory mRNAs (such as ceruplasmin) and suppresses their translation; seems not to be essential for GAIT complex function. This is Heterogeneous nuclear ribonucleoprotein Q (SYNCRIP) from Homo sapiens (Human).